The sequence spans 254 residues: 23S rRNA (guanosine-2'-O-)-methyltransferase RlmB (254 aa).

3 residues coordinate S-adenosyl-L-methionine: G198, I218, and L227.

This sequence belongs to the class IV-like SAM-binding methyltransferase superfamily. RNA methyltransferase TrmH family. RlmB subfamily. In terms of assembly, homodimer.

The protein localises to the cytoplasm. It carries out the reaction guanosine(2251) in 23S rRNA + S-adenosyl-L-methionine = 2'-O-methylguanosine(2251) in 23S rRNA + S-adenosyl-L-homocysteine + H(+). Functionally, specifically methylates the ribose of guanosine 2251 in 23S rRNA. In Blochmanniella floridana, this protein is 23S rRNA (guanosine-2'-O-)-methyltransferase RlmB.